The chain runs to 307 residues: E3 ubiquitin-protein ligase PHF7 (307 aa).

The C2HC pre-PHD-type zinc-finger motif lies at 30–68 (SPVCLLCLQEPGDPEKLGEFLQKDNLCVHYFCLILSSRL). Residues C33, C36, H58, and C61 each contribute to the Zn(2+) site. Residues 67-92 (RLPQKGQPNRGLHGFMPEDIKREAVR) form a required for interaction and ubiquitination of the nucleosome core particle region. The PHD-type zinc-finger motif lies at 96–145 (KICFVCKKKGAAIRCQNDQCVQNFHLPCGQERGCLSQFFGEYKSYCRKHR). Zn(2+)-binding residues include C98, C101, C110, C115, H120, C123, C141, H144, C160, C163, C179, C180, H186, C189, C204, C207, C248, C253, C273, C276, H282, C285, C297, and C300. Residues 150 to 307 (IHQGSLGEES…NECLPASTTS (158 aa)) form a required for interaction with ubiquitinated UBE2D2 region. Residues 160-208 (CVLCCENLSRTSVENIQSPCCSQAIYHRKCIQKYAHTSAKHFFKCPQCN) form an RING-type; degenerate zinc finger. The tract at residues 244-301 (RYRHCDAPICLYEQGRDSFEDEGRWRLILCATCGSHGTHRDCSSLRPNSKKWECNECL) is required for association with and ubiquitination of H3.

Interacts with MEF2C; the interaction promotes MEF2C binding to its transcription targets. Interacts with GATA4; the interaction promotes GATA4 binding to its transcription targets. Interacts with UBE2D2; the interaction inhibits cleavage of PHF7 and promotes association of the complex with the nucleosome core particle. As to expression, expressed in Leydig cells and in developing spermatids (at protein level). Highly expressed in Sertoli cells in testis.

The protein localises to the nucleus. The catalysed reaction is S-ubiquitinyl-[E2 ubiquitin-conjugating enzyme]-L-cysteine + [acceptor protein]-L-lysine = [E2 ubiquitin-conjugating enzyme]-L-cysteine + N(6)-ubiquitinyl-[acceptor protein]-L-lysine.. The protein operates within protein modification; protein ubiquitination. Its function is as follows. E3 ubiquitin-protein ligase which ubiquitinates histone H3 at 'Lys-14'. Required for male fertility, via inhibition of SPOP-mediated BRDT degradation when in the presence of acetylated histone H4 in early condensing spermatids. Stabilization of BRDT allows it to facilitate histone removal in early condensing spermatids and promote the progression of histone-to-protamine exchange. Promotes the expression of steroidogenesis proteins in the testes, and as a result plays a role in maintaining testosterone levels and repressing osteoclastogenesis. Promotes transcription of cardiac enhancer genes by facilitating binding of cardiac transcription factors such as MEF2C and GATA4 to target gene promoters. Ubiquitinates histone H4. Ubiquitinates histone H2A and H3 as part of the nucleosome core particle. This is E3 ubiquitin-protein ligase PHF7 from Mus musculus (Mouse).